We begin with the raw amino-acid sequence, 244 residues long: uncharacterized protein (244 aa).

The segment at 1 to 127 is disordered; sequence MSGPQGSDPR…YPGQYGPYGQ (127 aa). Polar residues predominate over residues 34–43; the sequence is WQQQPTQEAT. 2 stretches are compositionally biased toward low complexity: residues 45 to 75 and 88 to 127; these read QAPA…YAQP and PGQY…PYGQ. The helical transmembrane segment at 136-156 threads the bilayer; the sequence is VAVIGGVIAVMAVLFIGAVLI.

It is found in the membrane. This is an uncharacterized protein from Mycobacterium tuberculosis (strain CDC 1551 / Oshkosh).